A 104-amino-acid polypeptide reads, in one-letter code: L-rhamnose mutarotase (104 aa).

Tyr18 is a binding site for substrate. Residue His22 is the Proton donor of the active site. Residues Tyr41 and 76-77 (WW) contribute to the substrate site.

The protein belongs to the rhamnose mutarotase family. In terms of assembly, homodimer.

It is found in the cytoplasm. The catalysed reaction is alpha-L-rhamnose = beta-L-rhamnose. It participates in carbohydrate metabolism; L-rhamnose metabolism. Involved in the anomeric conversion of L-rhamnose. The polypeptide is L-rhamnose mutarotase (Clostridium beijerinckii (strain ATCC 51743 / NCIMB 8052) (Clostridium acetobutylicum)).